Here is a 277-residue protein sequence, read N- to C-terminus: Carbonyl reductase [NADPH] 1 (277 aa).

Residues 10-34, 63-64, and Asn90 contribute to the NADP(+) site; these read VTGA…GDVL and DI. Phosphoserine is present on Ser30. Glutathione-binding positions include 95–97 and Gln106; that span reads FKM. Ser140 contributes to the substrate binding site. 193 to 194 lines the glutathione pocket; sequence AY. The active-site Proton acceptor is the Tyr194. Residues 194 to 198 and 231 to 233 each bind NADP(+); these read YGVTK and VRT.

It belongs to the short-chain dehydrogenases/reductases (SDR) family. As to quaternary structure, monomer. As to expression, present in liver and kidney.

It localises to the cytoplasm. The catalysed reaction is a secondary alcohol + NADP(+) = a ketone + NADPH + H(+). It catalyses the reaction prostaglandin F2alpha + NADP(+) = prostaglandin E2 + NADPH + H(+). It carries out the reaction prostaglandin E1 + NADP(+) = 15-oxoprostaglandin E1 + NADPH + H(+). The enzyme catalyses menadione + NADPH + H(+) = menadiol + NADP(+). The catalysed reaction is prostaglandin D2 + NADP(+) = 15-oxoprostaglandin D2 + NADPH + H(+). It catalyses the reaction prostaglandin E2 + NADP(+) = 15-oxoprostaglandin E2 + NADPH + H(+). It carries out the reaction prostaglandin F2alpha + NADP(+) = 15-oxoprostaglandin F2alpha + NADPH + H(+). The enzyme catalyses daunorubicin + NADPH + H(+) = 13-dihydrodaunorubicin + NADP(+). The catalysed reaction is S-nitrosoglutathione + NADPH + H(+) = S-(hydroxysulfenamide)glutathione + NADP(+). It catalyses the reaction a primary alcohol + NADP(+) = an aldehyde + NADPH + H(+). It carries out the reaction cortisol + NADPH + H(+) = 20beta-dihydrocortisol + NADP(+). The enzyme catalyses corticosterone + NADPH + H(+) = 20beta-dihydrocorticosterone + NADP(+). NADPH-dependent reductase with broad substrate specificity. Catalyzes the reduction of a wide variety of carbonyl compounds including quinones, prostaglandins, menadione, plus various xenobiotics. Catalyzes the reduction of the antitumor anthracyclines doxorubicin and daunorubicin to the cardiotoxic compounds doxorubicinol and daunorubicinol. Can convert prostaglandin E to prostaglandin F2-alpha. Can bind glutathione, which explains its higher affinity for glutathione-conjugated substrates. Catalyzes the reduction of S-nitrosoglutathione. In addition, participates in the glucocorticoid metabolism by catalyzing the NADPH-dependent cortisol/corticosterone into 20beta-dihydrocortisol (20b-DHF) or 20beta-corticosterone (20b-DHB), which are weak agonists of NR3C1 and NR3C2 in adipose tissue. The polypeptide is Carbonyl reductase [NADPH] 1 (Oryctolagus cuniculus (Rabbit)).